An 880-amino-acid chain; its full sequence is DNA mismatch repair protein MutS (880 aa).

625–632 (GPNMAGKS) is a binding site for ATP.

Belongs to the DNA mismatch repair MutS family.

Functionally, this protein is involved in the repair of mismatches in DNA. It is possible that it carries out the mismatch recognition step. This protein has a weak ATPase activity. This Alkaliphilus oremlandii (strain OhILAs) (Clostridium oremlandii (strain OhILAs)) protein is DNA mismatch repair protein MutS.